We begin with the raw amino-acid sequence, 118 residues long: Aspartate 1-decarboxylase (118 aa).

The active-site Schiff-base intermediate with substrate; via pyruvic acid is Ser25. Ser25 bears the Pyruvic acid (Ser) mark. Thr57 is a substrate binding site. Tyr58 (proton donor) is an active-site residue. Gly73–Ala75 lines the substrate pocket.

The protein belongs to the PanD family. As to quaternary structure, heterooctamer of four alpha and four beta subunits. It depends on pyruvate as a cofactor. Post-translationally, is synthesized initially as an inactive proenzyme, which is activated by self-cleavage at a specific serine bond to produce a beta-subunit with a hydroxyl group at its C-terminus and an alpha-subunit with a pyruvoyl group at its N-terminus.

The protein localises to the cytoplasm. It carries out the reaction L-aspartate + H(+) = beta-alanine + CO2. It functions in the pathway cofactor biosynthesis; (R)-pantothenate biosynthesis; beta-alanine from L-aspartate: step 1/1. Catalyzes the pyruvoyl-dependent decarboxylation of aspartate to produce beta-alanine. This is Aspartate 1-decarboxylase from Phenylobacterium zucineum (strain HLK1).